The sequence spans 439 residues: Ribosomal protein uS12 methylthiotransferase RimO (439 aa).

Positions 4–114 (PKVGFVSLGC…VVRAVHGVAP (111 aa)) constitute an MTTase N-terminal domain. 6 residues coordinate [4Fe-4S] cluster: Cys13, Cys49, Cys78, Cys147, Cys151, and Cys154. Positions 133-370 (LTPRHYAYLK…MEHQQAISTA (238 aa)) constitute a Radical SAM core domain. In terms of domain architecture, TRAM spans 373-439 (STRVGREIDV…EYDLWGERIA (67 aa)).

The protein belongs to the methylthiotransferase family. RimO subfamily. [4Fe-4S] cluster serves as cofactor.

The protein resides in the cytoplasm. The catalysed reaction is L-aspartate(89)-[ribosomal protein uS12]-hydrogen + (sulfur carrier)-SH + AH2 + 2 S-adenosyl-L-methionine = 3-methylsulfanyl-L-aspartate(89)-[ribosomal protein uS12]-hydrogen + (sulfur carrier)-H + 5'-deoxyadenosine + L-methionine + A + S-adenosyl-L-homocysteine + 2 H(+). In terms of biological role, catalyzes the methylthiolation of an aspartic acid residue of ribosomal protein uS12. This Bordetella parapertussis (strain 12822 / ATCC BAA-587 / NCTC 13253) protein is Ribosomal protein uS12 methylthiotransferase RimO.